The sequence spans 274 residues: MNSKNHHQKKRFGQHWLVNKKILEKIKEIAVLNQNDFILEIGPGKGALTSKLLDSEIKKLHAIELDKDLINLLNDKFNNNDKFSLQQGDILTVNLDSINKKITKVIANIPYNITGPILDIFIGRLGITRNYNYEKIIFLMQKDVVDRILSKEGSPNAGALSVRMQLLSKIKKICDVPPSSFSPPPKVFSSLVVFEPIKNHLRLDISIEKNIDKLLRISFNSRRKMLRNTLNSILSNEEINELSESSKVCFNLRPQDISIEQWIKLAENCIKIKK.

Positions 15, 17, 42, 64, 89, and 108 each coordinate S-adenosyl-L-methionine.

It belongs to the class I-like SAM-binding methyltransferase superfamily. rRNA adenine N(6)-methyltransferase family. RsmA subfamily.

Its subcellular location is the cytoplasm. The catalysed reaction is adenosine(1518)/adenosine(1519) in 16S rRNA + 4 S-adenosyl-L-methionine = N(6)-dimethyladenosine(1518)/N(6)-dimethyladenosine(1519) in 16S rRNA + 4 S-adenosyl-L-homocysteine + 4 H(+). In terms of biological role, specifically dimethylates two adjacent adenosines (A1518 and A1519) in the loop of a conserved hairpin near the 3'-end of 16S rRNA in the 30S particle. May play a critical role in biogenesis of 30S subunits. In Prochlorococcus marinus (strain AS9601), this protein is Ribosomal RNA small subunit methyltransferase A.